The sequence spans 356 residues: UDP-N-acetylglucosamine--N-acetylmuramyl-(pentapeptide) pyrophosphoryl-undecaprenol N-acetylglucosamine transferase (356 aa).

UDP-N-acetyl-alpha-D-glucosamine contacts are provided by residues 12-14 (TGG), N124, R163, S188, I242, and Q287.

It belongs to the glycosyltransferase 28 family. MurG subfamily.

It localises to the cell inner membrane. The catalysed reaction is di-trans,octa-cis-undecaprenyl diphospho-N-acetyl-alpha-D-muramoyl-L-alanyl-D-glutamyl-meso-2,6-diaminopimeloyl-D-alanyl-D-alanine + UDP-N-acetyl-alpha-D-glucosamine = di-trans,octa-cis-undecaprenyl diphospho-[N-acetyl-alpha-D-glucosaminyl-(1-&gt;4)]-N-acetyl-alpha-D-muramoyl-L-alanyl-D-glutamyl-meso-2,6-diaminopimeloyl-D-alanyl-D-alanine + UDP + H(+). The protein operates within cell wall biogenesis; peptidoglycan biosynthesis. In terms of biological role, cell wall formation. Catalyzes the transfer of a GlcNAc subunit on undecaprenyl-pyrophosphoryl-MurNAc-pentapeptide (lipid intermediate I) to form undecaprenyl-pyrophosphoryl-MurNAc-(pentapeptide)GlcNAc (lipid intermediate II). In Pseudomonas fluorescens (strain Pf0-1), this protein is UDP-N-acetylglucosamine--N-acetylmuramyl-(pentapeptide) pyrophosphoryl-undecaprenol N-acetylglucosamine transferase.